A 465-amino-acid polypeptide reads, in one-letter code: FAD-dependent monooxygenase olcE (465 aa).

Residues 9 to 29 (IIIGGSVAGLTLALSLNKIGI) traverse the membrane as a helical segment. FAD contacts are provided by E35, G49, R108, D308, and A321.

Belongs to the paxM FAD-dependent monooxygenase family. The cofactor is FAD.

It localises to the membrane. The protein operates within secondary metabolite biosynthesis; terpenoid biosynthesis. Its function is as follows. FAD-dependent monooxygenase; part of the gene cluster that mediates the biosynthesis of 15-deoxyoxalicine B. The first step of the pathway is the synthesis of nicotinyl-CoA from nicotinic acid by the nicotinic acid-CoA ligase olcI. Nicotinyl-CoA is then a substrate of polyketide synthase olcA to produce 4-hydroxy-6-(3-pyridinyl)-2H-pyran-2-one (HPPO) which is further prenylated by the polyprenyl transferase olcH to yield geranylgeranyl-HPPO. Geranylgeranyl pyrophosphate is provided by the cluster-specific geranylgeranyl pyrophosphate synthase olcC. The FAD-dependent monooxygenase olcE catalyzes the epoxidation of geranylgeranyl-HPPO and the terpene cyclase olcD catalyzes the cyclization of the terpenoid component, resulting in the formation of the tricyclic terpene moiety seen in predecaturin E. The cytochrome P450 monooxygenase then catalyzes the allylic oxidation of predecaturin E, which is followed by spirocylization with concomitant loss of one molecule of water to form decaturin E. Decaturin E is the substrate of the cytochrome P450 monooxygenase olcJ which hydroxylates it at the C-29 position to form decaturin F. The short-chain dehydrogenase/reductase olcF may catalyze the oxidation of decaturin F to generate the 29-hydroxyl-27-one intermediate, and subsequent hemiacetal formation probably leads to the formation of decaturin C. The dioxygenase olcK may be a peroxisomal enzyme that catalyzes the hydroxylation of decaturin C into decaturin A once decaturin C is shuttled into the peroxisome by the MFS transporter olcL. Finally the cytochrome P450 monooxygenase olcB catalyzes the oxidative rearrangement to yield 15-deoxyoxalicine B. In the absence of olcJ, decaturin E may be shunted to a pathway in which it is oxidized to a ketone, possibly by olcF, to form decaturin D, which undergoes further allylic oxidation to yield decaturin G. Moreover, in the absence of oclK or oclL, oclB can convert decaturin C into 15-deoxyoxalicine A. The chain is FAD-dependent monooxygenase olcE from Penicillium canescens.